We begin with the raw amino-acid sequence, 206 residues long: Potassium channel B446_29190 (206 aa).

A topological domain (cytoplasmic) is located at residue methionine 1. The helical transmembrane segment at 2 to 25 (NESGRVEAFSDGVFAIAITLLILD) threads the bilayer. The RxxxFSD motif signature appears at 6–12 (RVEAFSD). Residues 26–44 (IKVPKADGPGGLWHALGAQ) are Extracellular-facing. Residues 31 to 34 (ADGP) are short helix H1. The tract at residues 36–42 (GLWHALG) is short helix H2. A helical transmembrane segment spans residues 45–70 (WPSYAAYVVSFLVIGIMWVNHHQVFS). Topologically, residues 71–76 (YVARVD) are cytoplasmic. A helical transmembrane segment spans residues 77 to 102 (RALMFLNLLVLMVVAAVPWPTAMLAE). Residues 103 to 110 (YLREDRAS) are Extracellular-facing. A helical transmembrane segment spans residues 111 to 135 (HVAAAVYSLVMVAMALAFQALWWHL). Over 136–147 (TRTGHLFDPRVD) the chain is Cytoplasmic. The helical transmembrane segment at 148-174 (APAARATRIRFALGSLGYPLTVGLAFV) threads the bilayer. The Extracellular portion of the chain corresponds to 175 to 176 (SA). Residues 177–192 (PLTLAAHGLLALYYGF) form a helical membrane-spanning segment. The Cytoplasmic segment spans residues 193–206 (NQVPVPTREAAAPS).

The protein belongs to the TMEM175 family. As to quaternary structure, homotetramer.

The protein resides in the membrane. It catalyses the reaction K(+)(in) = K(+)(out). Its function is as follows. Potassium channel. The protein is Potassium channel B446_29190 of Streptomyces collinus (strain DSM 40733 / Tue 365).